The following is a 153-amino-acid chain: Glucose-6-phosphate 1-dehydrogenase (153 aa).

The NADP(+) site is built by Arg21 and Lys120. Lys120 is a D-glucose 6-phosphate binding site.

Belongs to the glucose-6-phosphate dehydrogenase family.

Its subcellular location is the cytoplasm. It localises to the cytosol. It carries out the reaction D-glucose 6-phosphate + NADP(+) = 6-phospho-D-glucono-1,5-lactone + NADPH + H(+). The protein operates within carbohydrate degradation; pentose phosphate pathway; D-ribulose 5-phosphate from D-glucose 6-phosphate (oxidative stage): step 1/3. Its function is as follows. Cytosolic glucose-6-phosphate dehydrogenase that catalyzes the first and rate-limiting step of the oxidative branch within the pentose phosphate pathway/shunt, an alternative route to glycolysis for the dissimilation of carbohydrates and a major source of reducing power and metabolic intermediates for fatty acid and nucleic acid biosynthetic processes. The sequence is that of Glucose-6-phosphate 1-dehydrogenase (ZW) from Culex pipiens (House mosquito).